Reading from the N-terminus, the 406-residue chain is Indole-3-pyruvate monooxygenase YUCCA1 (406 aa).

21–26 (GAGPSG) serves as a coordination point for FAD. Position 184–189 (184–189 (GCGNSG)) interacts with NADP(+).

It belongs to the FMO family. It depends on FAD as a cofactor. In terms of tissue distribution, expressed in coleoptile tips, root tips, leaf blade tips, shoot apical meristem, vasculature of stems and flowers.

The catalysed reaction is indole-3-pyruvate + NADPH + O2 + H(+) = (indol-3-yl)acetate + CO2 + NADP(+) + H2O. Functionally, involved in auxin biosynthesis. Converts the indole-3-pyruvic acid (IPA) produced by the TAA family to indole-3-acetic acid (IAA). Functions downstream of TAR2 in auxin biosynthesis. Functions upstream of WOX11, a transcription factor that promotes the development of crown roots. The protein is Indole-3-pyruvate monooxygenase YUCCA1 of Oryza sativa subsp. japonica (Rice).